A 197-amino-acid polypeptide reads, in one-letter code: Ribonuclease HII (197 aa).

The RNase H type-2 domain maps to 11 to 197; it reads GRIAGVDEVG…FGPVKRVLGL (187 aa). A divalent metal cation-binding residues include Asp17, Glu18, and Asp109.

This sequence belongs to the RNase HII family. The cofactor is Mn(2+). Requires Mg(2+) as cofactor.

The protein localises to the cytoplasm. The enzyme catalyses Endonucleolytic cleavage to 5'-phosphomonoester.. Endonuclease that specifically degrades the RNA of RNA-DNA hybrids. This is Ribonuclease HII from Edwardsiella ictaluri (strain 93-146).